Consider the following 241-residue polypeptide: Probable WRKY transcription factor 63 (241 aa).

A disordered region spans residues Asn56–Ser79. The WRKY DNA-binding region spans Ser97–Phe165.

Belongs to the WRKY group III family.

The protein localises to the nucleus. Transcription factor. Interacts specifically with the W box (5'-(T)TGAC[CT]-3'), a frequently occurring elicitor-responsive cis-acting element. This is Probable WRKY transcription factor 63 (WRKY63) from Arabidopsis thaliana (Mouse-ear cress).